A 1127-amino-acid polypeptide reads, in one-letter code: E3 ubiquitin-protein ligase TRIM33 (1127 aa).

Over residues 1 to 18 (MAENKGGGEAESGGGGSG) the composition is skewed to gly residues. The interval 1–118 (MAENKGGGEA…PSAGPPPGPP (118 aa)) is disordered. The tract at residues 1 to 147 (MAENKGGGEA…AEPKLLPCLH (147 aa)) is necessary for E3 ubiquitin-protein ligase activity and repression of SMAD4 signaling and transcriptional repression. Residues 19-37 (SAPVTAGAAGPAAQEAEPP) are compositionally biased toward low complexity. Over residues 52-64 (RAGAEGGAAGPDD) the composition is skewed to gly residues. Low complexity predominate over residues 65-97 (GGVAAASSGSAQAASSPAASVGTGVAGGAVSTP). Positions 98–118 (APAPASAPAPGPSAGPPPGPP) are enriched in pro residues. An RING-type zinc finger spans residues 125 to 154 (CAVCQQSLQSRREAEPKLLPCLHSFCLRCL). 2 consecutive B box-type zinc fingers follow at residues 212-259 (KSEQ…IRKK) and 271-312 (QRPV…YQFL). Zn(2+)-binding residues include Cys-217, Cys-220, Cys-241, His-245, Cys-276, His-279, Cys-299, and His-304. The necessary for oligomerization stretch occupies residues 299–401 (CQLLEHKEHR…QMKLLQQQND (103 aa)). The stretch at 299-401 (CQLLEHKEHR…QMKLLQQQND (103 aa)) forms a coiled coil. Glycyl lysine isopeptide (Lys-Gly) (interchain with G-Cter in SUMO2) cross-links involve residues Lys-329, Lys-334, Lys-481, and Lys-504. At Arg-515 the chain carries Asymmetric dimethylarginine; alternate. Arg-515 bears the Omega-N-methylarginine; alternate mark. A Glycyl lysine isopeptide (Lys-Gly) (interchain with G-Cter in SUMO2) cross-link involves residue Lys-527. The residue at position 535 (Arg-535) is an Omega-N-methylarginine. Residues 536–563 (MQQPPAPVPTTTTTTQQHPRQAAPQMLQ) are disordered. An Asymmetric dimethylarginine modification is found at Arg-577. The residue at position 591 (Arg-591) is an Asymmetric dimethylarginine; alternate. Residue Arg-591 is modified to Omega-N-methylarginine; alternate. Residues Arg-598 and Arg-604 each carry the asymmetric dimethylarginine modification. 3 disordered regions span residues 608–629 (PQYS…HAGP), 673–692 (NPEN…EDAG), and 703–818 (YISG…TPPL). The span at 723–759 (PSALSPGSSGLSNSHTPVRPPSTSSTGSRGSCGSSGR) shows a compositional bias: low complexity. N6-acetyllysine; alternate is present on residues Lys-763 and Lys-769. Glycyl lysine isopeptide (Lys-Gly) (interchain with G-Cter in SUMO2); alternate cross-links involve residues Lys-763 and Lys-769. Lys-774 participates in a covalent cross-link: Glycyl lysine isopeptide (Lys-Gly) (interchain with G-Cter in SUMO2). Residues Lys-776 and Lys-793 each participate in a glycyl lysine isopeptide (Lys-Gly) (interchain with G-Cter in SUMO2); alternate cross-link. Residues Lys-776 and Lys-793 each participate in a glycyl lysine isopeptide (Lys-Gly) (interchain with G-Cter in SUMO1); alternate cross-link. Position 793 is an N6-acetyllysine; alternate (Lys-793). A compositionally biased stretch (basic and acidic residues) spans 793-802 (KQEKTEDGRR). Lys-796 participates in a covalent cross-link: Glycyl lysine isopeptide (Lys-Gly) (interchain with G-Cter in SUMO2). Residue Ser-803 is modified to Phosphoserine. Over residues 807-818 (LSSPESSLTPPL) the composition is skewed to low complexity. Thr-815 carries the phosphothreonine modification. A Glycyl lysine isopeptide (Lys-Gly) (interchain with G-Cter in SUMO2) cross-link involves residue Lys-861. Ser-862 carries the phosphoserine modification. The segment at 887–934 (EDWCAVCQNGGDLLCCEKCPKVFHLTCHVPTLLSFPSGDWICTFCRDI) adopts a PHD-type zinc-finger fold. At Lys-951 the chain carries N6-acetyllysine. Lys-953 bears the N6-acetyllysine; alternate mark. A Glycyl lysine isopeptide (Lys-Gly) (interchain with G-Cter in SUMO2); alternate cross-link involves residue Lys-953. Residues 957–1080 (GLSPVDQRKC…LYFEDKLTEI (124 aa)) form the Bromo domain. Glycyl lysine isopeptide (Lys-Gly) (interchain with G-Cter in SUMO2) cross-links involve residues Lys-1007 and Lys-1043. Position 1051 is a phosphothreonine (Thr-1051). A Glycyl lysine isopeptide (Lys-Gly) (interchain with G-Cter in SUMO2) cross-link involves residue Lys-1057. The disordered stretch occupies residues 1088 to 1127 (PLPEFEQEEDDGEVTEDSDEDFIQPRRKRLKSDERPVHIK). A compositionally biased stretch (acidic residues) spans 1092–1109 (FEQEEDDGEVTEDSDEDF). Thr-1102 bears the Phosphothreonine mark. The residue at position 1105 (Ser-1105) is a Phosphoserine. Residue Lys-1118 forms a Glycyl lysine isopeptide (Lys-Gly) (interchain with G-Cter in SUMO2) linkage. Positions 1118–1127 (KSDERPVHIK) are enriched in basic and acidic residues. A Phosphoserine modification is found at Ser-1119.

Belongs to the TRIM/RBCC family. In terms of assembly, homooligomer and heterooligomer with TRIM24 and TRIM28 family members. Interacts with SMAD4 in unstimulated cells. Found in a complex with SMAD2 and SMAD3 upon addition of TGF-beta. Interacts with SMAD2 and SMAD3. Interacts with SMAD4 under basal and induced conditions and, upon TGF-beta signaling, with activated SMAD2. Forms a ternary complex with SMAD4 and SMAD2 upon TGF-beta signaling. Sumoylated with SUMO1. Expressed in stem cells at the bottom of the crypts of the colon (at protein level). Expressed in colon adenomas and adenocarcinomas (at protein level). Expressed in brain, lung, liver, spleen, thymus, prostate, kidney, testis, heart, placenta, pancreas, small intestine, ovary, colon, skeletal muscle and hematopoietic progenitors.

The protein localises to the nucleus. It catalyses the reaction S-ubiquitinyl-[E2 ubiquitin-conjugating enzyme]-L-cysteine + [acceptor protein]-L-lysine = [E2 ubiquitin-conjugating enzyme]-L-cysteine + N(6)-ubiquitinyl-[acceptor protein]-L-lysine.. It participates in protein modification; protein ubiquitination. Its function is as follows. Acts as an E3 ubiquitin-protein ligase. Promotes SMAD4 ubiquitination, nuclear exclusion and degradation via the ubiquitin proteasome pathway. According to PubMed:16751102, does not promote a decrease in the level of endogenous SMAD4. May act as a transcriptional repressor. Inhibits the transcriptional response to TGF-beta/BMP signaling cascade. Plays a role in the control of cell proliferation. Its association with SMAD2 and SMAD3 stimulates erythroid differentiation of hematopoietic stem/progenitor. Monoubiquitinates SMAD4 and acts as an inhibitor of SMAD4-dependent TGF-beta/BMP signaling cascade (Monoubiquitination of SMAD4 hampers its ability to form a stable complex with activated SMAD2/3 resulting in inhibition of TGF-beta/BMP signaling cascade). This Homo sapiens (Human) protein is E3 ubiquitin-protein ligase TRIM33 (TRIM33).